Consider the following 344-residue polypeptide: Uroporphyrinogen decarboxylase (344 aa).

Residues 26–30, Phe45, Asp75, Tyr151, Ser206, and His320 each bind substrate; that span reads RQAGR.

It belongs to the uroporphyrinogen decarboxylase family. In terms of assembly, homodimer.

The protein localises to the cytoplasm. The catalysed reaction is uroporphyrinogen III + 4 H(+) = coproporphyrinogen III + 4 CO2. Its pathway is porphyrin-containing compound metabolism; protoporphyrin-IX biosynthesis; coproporphyrinogen-III from 5-aminolevulinate: step 4/4. In terms of biological role, catalyzes the decarboxylation of four acetate groups of uroporphyrinogen-III to yield coproporphyrinogen-III. The sequence is that of Uroporphyrinogen decarboxylase from Staphylococcus haemolyticus (strain JCSC1435).